The primary structure comprises 328 residues: Gonadotropin-releasing hormone receptor (328 aa).

At 1–38 (MANSDSPEQNENHCSAINSSIPLTPGSLPTLTLSGKIR) the chain is on the extracellular side. Residue N18 is glycosylated (N-linked (GlcNAc...) asparagine). A helical membrane pass occupies residues 39–58 (VTVTFFLFLLSTIFNTSFLL). Topologically, residues 59-77 (KLQNWTQRKEKRKKLSRMK) are cytoplasmic. A helical membrane pass occupies residues 78–97 (LLLKHLTLANLLETLIVMPL). The Extracellular portion of the chain corresponds to 98–115 (DGMWNITVQWYAGELLCK). Residue N102 is glycosylated (N-linked (GlcNAc...) asparagine). C114 and C196 are oxidised to a cystine. A helical membrane pass occupies residues 116–137 (VLSYLKLFSMYAPAFMMVVISL). The Cytoplasmic segment spans residues 138–164 (DRSLAITKPLAVKSNSKLGQFMIGLAW). Residues 165–184 (LLSSIFAGPQLYIFGMIHLA) form a helical membrane-spanning segment. Residues 185 to 212 (DDSGQTEGFSQCVTHCSFPQWWHQAFYN) lie on the Extracellular side of the membrane. Residues 213-232 (FFTFSCLFIIPLLIMVICNA) form a helical membrane-spanning segment. Over 233-281 (KIIFTLTRVLHQDPHKLQLNQSKNNIPRARLRTLKMTVAFATSFTVCWT) the chain is Cytoplasmic. Residues 282 to 300 (PYYVLGIWYWFDPDMVNRV) traverse the membrane as a helical segment. At 301–306 (SDPVNH) the chain is on the extracellular side. Residues 307–326 (FFFLFAFLNPCFDPLIYGYF) traverse the membrane as a helical segment. Over 327–328 (SL) the chain is Cytoplasmic.

The protein belongs to the G-protein coupled receptor 1 family.

The protein resides in the cell membrane. Receptor for gonadotropin releasing hormone (GnRH) that mediates the action of GnRH to stimulate the secretion of the gonadotropic hormones luteinizing hormone (LH) and follicle-stimulating hormone (FSH). This receptor mediates its action by association with G-proteins that activate a phosphatidylinositol-calcium second messenger system. This Bos taurus (Bovine) protein is Gonadotropin-releasing hormone receptor (GNRHR).